The sequence spans 397 residues: Serpin B10 (397 aa).

Positions 74-77 match the Nuclear localization signal motif; sequence KKRK.

The protein belongs to the serpin family. Ov-serpin subfamily.

It is found in the nucleus. The protein resides in the cytoplasm. Protease inhibitor that may play a role in the regulation of protease activities during hematopoiesis and apoptosis induced by TNF. May regulate protease activities in the cytoplasm and in the nucleus. The chain is Serpin B10 (SERPINB10) from Sorex araneus (Eurasian common shrew).